The chain runs to 1070 residues: DNA-directed RNA polymerase subunit beta (1070 aa).

The protein belongs to the RNA polymerase beta chain family. In plastids the minimal PEP RNA polymerase catalytic core is composed of four subunits: alpha, beta, beta', and beta''. When a (nuclear-encoded) sigma factor is associated with the core the holoenzyme is formed, which can initiate transcription.

The protein localises to the plastid. The protein resides in the chloroplast. It carries out the reaction RNA(n) + a ribonucleoside 5'-triphosphate = RNA(n+1) + diphosphate. In terms of biological role, DNA-dependent RNA polymerase catalyzes the transcription of DNA into RNA using the four ribonucleoside triphosphates as substrates. The chain is DNA-directed RNA polymerase subunit beta from Chloranthus spicatus (Chulantree).